A 957-amino-acid polypeptide reads, in one-letter code: MSQLLSLSQLREPNAFLNRHLGPDAEEQQAMLASLGLGSRAELIEQTVPPGIRFNRALDLPPALDEAAALARLKGYAGQNQVWTSLIGMGYHATLTPTVILRNVLENPGWYTAYTPYQPEIAQGRLEALLNFQQMTIDLTGLDLANASLLDEATAAAEAMALAKRVSKSSSNLFFVDEHCHPQTVSVVRTRAEGFGFELVVGGVDELSGHQVFGALLQYPDTHGEIRDLRPLIDQLHAQQALACVAADLLSLLLLTPPGELGADVVLGSSQRFGVPMGYGGPHAAFFACRDDYKRAMPGRIIGVSKDARGQVALRMALQTREQHIRREKANSNICTAQVLLANIAGFYAVYHGPAGLKRIAQRVHRLTCILAVGLERHGIARVNRHFFDTLTLEVGGSQTAIIESARAQQINLRILGRGRLGLSLDETCDESTVTRLFDVFLGADHGLDVSNLDAEALESGIPDPLLRRTRYLTHPVFSAHHSETEMLRYLKQLENKDLALNQSMIPLGSCTMKLNASSEMIPITWPEFANLHPFAPREQAAGYGLLIAELERWLCAITGFDAICMQPNSGAQGEYAGLLAIRRYHESRRQGGRHVCLIPASAHGTNPASAQMAGMQVVIVECDEAGNVDLEDLKAKAQAAGERLSCLMATYPSTHGVYEEGISQICEVIHSHGGQVYMDGANLNAQVGLARPADIGADVSHMNLHKTFCIPHGGGGPGMGPIGVRAHLAPFVANHPVVPIDGPLPENGAVSAAPWGSASILPISWMYIALMGPQLADASEVAILAANYLAEQLSGAFPVLYSGRNGRVAHECILDLRPLKAQTGISEEDVAKRLMDYGFHAPTMSFPVPGTLMVEPTESESKAELDRFIEAMLSIRAEIAQVQEGNWPAEDNPLKGAPHTLADITGVWERSYSIEQAVLPTAHTRAHKYWPAVNRVDNVYGDRNLFCACVPLADYR.

N6-(pyridoxal phosphate)lysine is present on lysine 707.

The protein belongs to the GcvP family. In terms of assembly, the glycine cleavage system is composed of four proteins: P, T, L and H. It depends on pyridoxal 5'-phosphate as a cofactor.

It carries out the reaction N(6)-[(R)-lipoyl]-L-lysyl-[glycine-cleavage complex H protein] + glycine + H(+) = N(6)-[(R)-S(8)-aminomethyldihydrolipoyl]-L-lysyl-[glycine-cleavage complex H protein] + CO2. Functionally, the glycine cleavage system catalyzes the degradation of glycine. The P protein binds the alpha-amino group of glycine through its pyridoxal phosphate cofactor; CO(2) is released and the remaining methylamine moiety is then transferred to the lipoamide cofactor of the H protein. In Pseudomonas fluorescens (strain ATCC BAA-477 / NRRL B-23932 / Pf-5), this protein is Glycine dehydrogenase (decarboxylating) 2.